A 249-amino-acid chain; its full sequence is Phosphate import ATP-binding protein PstB 1 (249 aa).

An ABC transporter domain is found at 4-244 (FNIENLDLFY…PKDDRTQGYV (241 aa)). Position 36–43 (36–43 (GPSGCGKS)) interacts with ATP.

Belongs to the ABC transporter superfamily. Phosphate importer (TC 3.A.1.7) family. In terms of assembly, the complex is composed of two ATP-binding proteins (PstB), two transmembrane proteins (PstC and PstA) and a solute-binding protein (PstS).

The protein resides in the cell inner membrane. The enzyme catalyses phosphate(out) + ATP + H2O = ADP + 2 phosphate(in) + H(+). Part of the ABC transporter complex PstSACB involved in phosphate import. Responsible for energy coupling to the transport system. This is Phosphate import ATP-binding protein PstB 1 from Aliivibrio fischeri (strain ATCC 700601 / ES114) (Vibrio fischeri).